A 235-amino-acid polypeptide reads, in one-letter code: Large ribosomal subunit protein uL1 (235 aa).

This sequence belongs to the universal ribosomal protein uL1 family. As to quaternary structure, part of the 50S ribosomal subunit.

Functionally, binds directly to 23S rRNA. The L1 stalk is quite mobile in the ribosome, and is involved in E site tRNA release. Protein L1 is also a translational repressor protein, it controls the translation of the L11 operon by binding to its mRNA. In Lawsonia intracellularis (strain PHE/MN1-00), this protein is Large ribosomal subunit protein uL1.